The primary structure comprises 533 residues: Probable lipid II flippase MurJ (533 aa).

Transmembrane regions (helical) follow at residues 11-31 (LANI…FGLL), 39-61 (AFGV…FLFI), 96-116 (LVSG…GIFI), 135-155 (LQIM…FGTL), 166-186 (ISPL…VWQL), 196-216 (WLLG…LQWL), 253-273 (LSSG…SFIP), 284-304 (FVAL…FLPV), 330-350 (LTMF…VQVI), 360-380 (AAAE…FYLG), 400-420 (VSLF…KPFG), 422-442 (VGIV…FIWM), 452-472 (LGGW…ASVA), and 493-513 (ILEV…GVAL).

The protein belongs to the MurJ/MviN family.

The protein localises to the cell inner membrane. The protein operates within cell wall biogenesis; peptidoglycan biosynthesis. Involved in peptidoglycan biosynthesis. Transports lipid-linked peptidoglycan precursors from the inner to the outer leaflet of the cytoplasmic membrane. This Synechocystis sp. (strain ATCC 27184 / PCC 6803 / Kazusa) protein is Probable lipid II flippase MurJ.